A 139-amino-acid polypeptide reads, in one-letter code: Small ribosomal subunit protein uS12 (139 aa).

The segment at 1–44 (MPTINQLVKKPRTSKVKKSTAPALNKGYNSHKKKATDLASPQKR) is disordered. Residues 9–18 (KKPRTSKVKK) are compositionally biased toward basic residues. Asp102 carries the post-translational modification 3-methylthioaspartic acid.

The protein belongs to the universal ribosomal protein uS12 family. As to quaternary structure, part of the 30S ribosomal subunit. Contacts proteins S8 and S17. May interact with IF1 in the 30S initiation complex.

With S4 and S5 plays an important role in translational accuracy. In terms of biological role, interacts with and stabilizes bases of the 16S rRNA that are involved in tRNA selection in the A site and with the mRNA backbone. Located at the interface of the 30S and 50S subunits, it traverses the body of the 30S subunit contacting proteins on the other side and probably holding the rRNA structure together. The combined cluster of proteins S8, S12 and S17 appears to hold together the shoulder and platform of the 30S subunit. The chain is Small ribosomal subunit protein uS12 from Macrococcus caseolyticus (strain JCSC5402) (Macrococcoides caseolyticum).